The primary structure comprises 202 residues: NAD(P)H dehydrogenase (quinone) (202 aa).

A Flavodoxin-like domain is found at 7–193; the sequence is VLVLYYSMYG…TIARFQGRHF (187 aa). Residues 13–18 and 82–84 each bind FMN; these read SMYGHI and TRF. Y15 serves as a coordination point for NAD(+). Substrate is bound at residue W102. FMN contacts are provided by residues 117–122 and H137; that span reads STATGG.

Belongs to the WrbA family. FMN is required as a cofactor.

It catalyses the reaction a quinone + NADH + H(+) = a quinol + NAD(+). The catalysed reaction is a quinone + NADPH + H(+) = a quinol + NADP(+). The polypeptide is NAD(P)H dehydrogenase (quinone) (Rhodospirillum rubrum (strain ATCC 11170 / ATH 1.1.1 / DSM 467 / LMG 4362 / NCIMB 8255 / S1)).